The primary structure comprises 146 residues: Hemoglobin subunit beta (146 aa).

Val1 is subject to N-acetylvaline. The region spanning 2-146 (HLTAEEKNAI…VANALAHKYH (145 aa)) is the Globin domain. Thr12 carries the post-translational modification Phosphothreonine. Lys59 bears the N6-acetyllysine mark. Residue His63 participates in heme b binding. Residue Lys82 is modified to N6-acetyllysine. His92 is a heme b binding site. Position 93 is an S-nitrosocysteine (Cys93). The residue at position 144 (Lys144) is an N6-acetyllysine.

The protein belongs to the globin family. Heterotetramer of two alpha chains and two beta chains. In terms of tissue distribution, red blood cells.

Its function is as follows. Involved in oxygen transport from the lung to the various peripheral tissues. This is Hemoglobin subunit beta (HBB) from Osphranter rufus (Red kangaroo).